The sequence spans 702 residues: MNSLFASTARGLEELLKTELENLGAVECQVVQGGVHFKGDTRLVYQSLMWSRLASRIMLPLGECKVYSDLDLYLGVQAINWTEMFNPGATFAVHFSGLNDTIRNSQYGAMKVKDAIVDAFTRKNLPRPNVDRDAPDIRVNVWLHKETASIALDLSGDGLHLRGYRDRAGIAPIKETLAAAIVMRSGWQPGTPLLDPMCGSGTLLIEAAMLATDRAPGLHRGRWGFSGWAQHDEAIWQEVKAEAQTRARKGLAEYSSHFYGSDSDARVIQRARTNARLAGIGELITFEVKDVAQLTNPLPKGPYGTVLSNPPYGERLDSEPALIALHSLLGRIMKNQFGGWNLSLFSASPDLLSCLQLRADKQYKAKNGPLDCVQKNYHVAESTPDSKPAMVAEDYANRLRKNLKKFEKWARQEGIECYRLYDADLPEYNVAVDRYSDWVVVQEYAPPKTIDAHKARQRLFDIIAATISVLGIAPNKLVLKTRERQKGKNQYQKLGEKGEFLEVTEYNAHLWVNLTDYLDTGLFLDHRIARRMLGQMSKGKDFLNLFSYTGSATVHAGLGGALSTTTVDMSRTYLEWAERNLRLNGLTGRAHRLIQADCLAWLREANEQFDLIFIDPPTFSNSKRMEDAFDVQRDHLALMKDLKRLLRAGGTIMFSNNKRGFRMDLDGLAKLGLKAQEITQKTLSQDFARNRQIHNCWLITAA.

A THUMP domain is found at 43-154; that stretch reads LVYQSLMWSR…KETASIALDL (112 aa).

Belongs to the methyltransferase superfamily. RlmKL family.

The protein resides in the cytoplasm. It carries out the reaction guanosine(2445) in 23S rRNA + S-adenosyl-L-methionine = N(2)-methylguanosine(2445) in 23S rRNA + S-adenosyl-L-homocysteine + H(+). It catalyses the reaction guanosine(2069) in 23S rRNA + S-adenosyl-L-methionine = N(2)-methylguanosine(2069) in 23S rRNA + S-adenosyl-L-homocysteine + H(+). In terms of biological role, specifically methylates the guanine in position 2445 (m2G2445) and the guanine in position 2069 (m7G2069) of 23S rRNA. This chain is Ribosomal RNA large subunit methyltransferase K/L, found in Shigella boydii serotype 4 (strain Sb227).